Consider the following 216-residue polypeptide: Large ribosomal subunit protein uL1B (216 aa).

S11 carries the post-translational modification Phosphoserine.

The protein belongs to the universal ribosomal protein uL1 family. In terms of assembly, component of the large ribosomal subunit (LSU). Mature yeast ribosomes consist of a small (40S) and a large (60S) subunit. The 40S small subunit contains 1 molecule of ribosomal RNA (18S rRNA) and at least 33 different proteins. The large 60S subunit contains 3 rRNA molecules (25S, 5.8S and 5S rRNA) and at least 46 different proteins. uL1 forms part of the L1 stalk.

The protein localises to the cytoplasm. Component of the ribosome, a large ribonucleoprotein complex responsible for the synthesis of proteins in the cell. The small ribosomal subunit (SSU) binds messenger RNAs (mRNAs) and translates the encoded message by selecting cognate aminoacyl-transfer RNA (tRNA) molecules. The large subunit (LSU) contains the ribosomal catalytic site termed the peptidyl transferase center (PTC), which catalyzes the formation of peptide bonds, thereby polymerizing the amino acids delivered by tRNAs into a polypeptide chain. The nascent polypeptides leave the ribosome through a tunnel in the LSU and interact with protein factors that function in enzymatic processing, targeting, and the membrane insertion of nascent chains at the exit of the ribosomal tunnel. uL1 forms part of the L1 stalk, a mobile element that plays a role in evacuating the exit-site tRNA. The sequence is that of Large ribosomal subunit protein uL1B (rpl101) from Schizosaccharomyces pombe (strain 972 / ATCC 24843) (Fission yeast).